The following is a 342-amino-acid chain: DNA primase (342 aa).

Residues cysteine 37, cysteine 40, cysteine 65, and cysteine 68 each contribute to the Zn(2+) site.

The protein belongs to the Tequatrovirus DNA primase family. Monomer. Hexamer. Interacts with the DnaB-like replicative helicase; this interaction forms the active primosome complex, which is composed of 6 helicase and 1 primase subunits and expresses full helicase and primase activities. Interacts (via C-terminus) with the single-stranded DNA-binding protein. Part of the replicase complex that includes the DNA polymerase, the polymerase clamp, the clamp loader complex, the single-stranded DNA binding protein, the primase, the DnaB-like replicative helicase and the helicase assembly factor.

Its function is as follows. Synthesizes short RNA primers for the lagging strand DNA replication. The primase synthesizes short RNA primers on the lagging strand that the polymerase elongates using dNTPs. Recognizes two trinucleotide sequences 5'-GTT-3' and 5'-GCT-3' in vitro, but uses only the first as the priming site in vivo. This chain is DNA primase (61), found in Escherichia coli (Bacteriophage T4).